Reading from the N-terminus, the 225-residue chain is Methyl-CpG-binding domain-containing protein 6 (225 aa).

The interval 25 to 92 (GDGTLDSSAK…PGWRVEDKIR (68 aa)) is disordered. Residues 71–146 (RKRAAPGDNW…ENTYFNPDHF (76 aa)) enclose the MBD domain.

Homodimer and heterodimer with MBD5. Interacts with DDM1 via its MBD domain. Interacts with NTF2, RPS2C, HDA6 and AGO4. In terms of tissue distribution, expressed in rosette leaves, buds, flowers, stems, mature seeds and roots.

The protein localises to the nucleus. Its subcellular location is the chromosome. It localises to the nucleolus. In terms of biological role, transcriptional regulator that binds CpG, CpNpN and CpNpG (N is A, T, or C) islands in promoters regardless the DNA methylation status. Plays probably a role in gene silencing. May associate with histone deacetylase proteins (HDAC). Required for nucleolar dominance that consist in the silencing of rRNA genes inherited from one progenitor in genetic hybrids. Recruited to rRNA genes in a DRM2-dependent manner. Maintains gene silencing by interacting with RNA binding proteins (e.g. NTF2, RPS2C, HDA6 and AGO4) and by regulating DNA methylation status. The protein is Methyl-CpG-binding domain-containing protein 6 of Arabidopsis thaliana (Mouse-ear cress).